Consider the following 280-residue polypeptide: Eukaryotic translation initiation factor 3 subunit F-1 (280 aa).

The MPN domain occupies 8–138; the sequence is VRVHPVVLFQ…LRAYVCIQLG (131 aa).

It belongs to the eIF-3 subunit F family. Component of the eukaryotic translation initiation factor 3 (eIF-3) complex. The eIF-3 complex interacts with pix.

Its subcellular location is the cytoplasm. Functionally, component of the eukaryotic translation initiation factor 3 (eIF-3) complex, which is involved in protein synthesis of a specialized repertoire of mRNAs and, together with other initiation factors, stimulates binding of mRNA and methionyl-tRNAi to the 40S ribosome. The eIF-3 complex specifically targets and initiates translation of a subset of mRNAs involved in cell proliferation. The polypeptide is Eukaryotic translation initiation factor 3 subunit F-1 (Drosophila willistoni (Fruit fly)).